We begin with the raw amino-acid sequence, 209 residues long: Large ribosomal subunit protein uL3 (209 aa).

The tract at residues 124-156 (KRHNFSGGQRTHGQSDRQRAPGSVGGSSDPSRV) is disordered.

It belongs to the universal ribosomal protein uL3 family. In terms of assembly, part of the 50S ribosomal subunit. Forms a cluster with proteins L14 and L19.

Its function is as follows. One of the primary rRNA binding proteins, it binds directly near the 3'-end of the 23S rRNA, where it nucleates assembly of the 50S subunit. In Pelodictyon phaeoclathratiforme (strain DSM 5477 / BU-1), this protein is Large ribosomal subunit protein uL3.